A 338-amino-acid chain; its full sequence is Ketol-acid reductoisomerase (NADP(+)) (338 aa).

Residues 1–181 (MKVYYDKDAD…GGTKGGVIET (181 aa)) form the KARI N-terminal Rossmann domain. Residues 24–27 (YGSQ), arginine 47, and serine 52 each bind NADP(+). Histidine 107 is a catalytic residue. Glycine 133 contacts NADP(+). The 146-residue stretch at 182–327 (NFKEETETDL…GQLRDMMPWI (146 aa)) folds into the KARI C-terminal knotted domain. The Mg(2+) site is built by aspartate 190, glutamate 194, glutamate 226, and glutamate 230. Residue serine 251 participates in substrate binding.

The protein belongs to the ketol-acid reductoisomerase family. It depends on Mg(2+) as a cofactor.

The catalysed reaction is (2R)-2,3-dihydroxy-3-methylbutanoate + NADP(+) = (2S)-2-acetolactate + NADPH + H(+). It catalyses the reaction (2R,3R)-2,3-dihydroxy-3-methylpentanoate + NADP(+) = (S)-2-ethyl-2-hydroxy-3-oxobutanoate + NADPH + H(+). Its pathway is amino-acid biosynthesis; L-isoleucine biosynthesis; L-isoleucine from 2-oxobutanoate: step 2/4. It functions in the pathway amino-acid biosynthesis; L-valine biosynthesis; L-valine from pyruvate: step 2/4. Involved in the biosynthesis of branched-chain amino acids (BCAA). Catalyzes an alkyl-migration followed by a ketol-acid reduction of (S)-2-acetolactate (S2AL) to yield (R)-2,3-dihydroxy-isovalerate. In the isomerase reaction, S2AL is rearranged via a Mg-dependent methyl migration to produce 3-hydroxy-3-methyl-2-ketobutyrate (HMKB). In the reductase reaction, this 2-ketoacid undergoes a metal-dependent reduction by NADPH to yield (R)-2,3-dihydroxy-isovalerate. The polypeptide is Ketol-acid reductoisomerase (NADP(+)) (Azoarcus sp. (strain BH72)).